The primary structure comprises 548 residues: WEB family protein At1g12150 (548 aa).

Positions 71 to 544 form a coiled coil; the sequence is KEFMKIKQKL…ELQRWRQQEN (474 aa). Over residues 430-448 the composition is skewed to basic and acidic residues; sequence VREEMKMISQKQESKKQDE. The disordered stretch occupies residues 430-455; sequence VREEMKMISQKQESKKQDEESSGSKI.

This sequence belongs to the WEB family.

The polypeptide is WEB family protein At1g12150 (Arabidopsis thaliana (Mouse-ear cress)).